The primary structure comprises 607 residues: CUB and zona pellucida-like domain-containing protein 1 (607 aa).

An N-terminal signal peptide occupies residues 1–19; the sequence is MEVTGRLFIWAILAVSCRA. Residues 20 to 568 are Lumenal-facing; the sequence is QLNSTAAEGR…AEISKQPLSH (549 aa). N-linked (GlcNAc...) asparagine glycosylation is present at Asn-22. A disulfide bridge links Cys-32 with Cys-58. CUB domains lie at 32–146 and 154–265; these read CTAS…YFFS and CGGY…YAST. N-linked (GlcNAc...) asparagine glycosylation is present at Asn-67. Cystine bridges form between Cys-85-Cys-107 and Cys-154-Cys-180. Asn-195 carries N-linked (GlcNAc...) asparagine glycosylation. An intrachain disulfide couples Cys-207 to Cys-229. A ZP domain is found at 276-519; the sequence is SCASDKMRVI…SRCNQGCVSR (244 aa). N-linked (GlcNAc...) asparagine glycosylation is present at Asn-419. Cys-442 and Cys-498 form a disulfide bridge. Residues 569-589 traverse the membrane as a helical segment; it reads LHLFSFMVLALNVVIVVTATV. At 590–607 the chain is on the cytoplasmic side; that stretch reads RHFLNRWKDHGYQKLQVY.

Expressed predominantly in epithelium of uterus and oviduct.

The protein localises to the zymogen granule membrane. Functionally, localized to zymogen granules, where it functions in trypsinogen activation. May indirectly regulate cell motility, cell-cell and cell/extracellular matrix interactions. The sequence is that of CUB and zona pellucida-like domain-containing protein 1 from Rattus norvegicus (Rat).